The following is an 805-amino-acid chain: MAQPLAFILDVPETPGDQGQGPSPYDESEVHDSFQQLIQEQSQCTAQEGLELQQREREVTGSSQQTLWRPEGTQSTATLRILASMPSRTIGRSRGAIISQYYNRTVQLRCRSSRPLLGNFVRSAWPSLRLYDLELDPTALEEEEKQSLLVKELQSLAVAQRDHMLRGMPLSLAEKRSLREKSRTPRGKWRGQPGSGGVCSCCGRLRYACVLALHSLGLALLSALQALMPWRYALKRIGGQFGSSVLSYFLFLKTLLAFNALLLLLLVAFIMGPQVAFPPALPGPAPVCTGLELLTGAGCFTHTVMYYGHYSNATLNQPCGSPLDGSQCTPRVGGLPYNMPLAYLSTVGVSFFITCITLVYSMAHSFGESYRVGSTSGIHAITVFCSWDYKVTQKRASRLQQDNIRTRLKELLAEWQLRHSPRSVCGRLRQAAVLGLVWLLCLGTALGCAVAVHVFSEFMIQSPEAAGQEAVLLVLPLVVGLLNLGAPYLCRVLAALEPHDSPVLEVYVAICRNLILKLAILGTLCYHWLGRRVGVLQGQCWEDFVGQELYRFLVMDFVLMLLDTLFGELVWRIISEKKLKRRRKPEFDIARNVLELIYGQTLTWLGVLFSPLLPAVQIIKLLLVFYVKKTSLLANCQAPRRPWLASHMSTVFLTLLCFPAFLGAAVFLCYAVWQVKPSSTCGPFRTLDTMYEAGRVWVRHLEAAGPRVSWLPWVHRYLMENTFFVFLVSALLLAVIYLNIQVVRGQRKVICLLKEQISNEGEDKIFLINKLHSIYERKEREERSRVGTTEEAAAPPALLTDEQDA.

Positions 1-29 are disordered; the sequence is MAQPLAFILDVPETPGDQGQGPSPYDESE. The Lumenal portion of the chain corresponds to 1–209; that stretch reads MAQPLAFILD…SCCGRLRYAC (209 aa). The residue at position 89 (Thr-89) is a Phosphothreonine. Arg-94 is subject to Omega-N-methylarginine. The N-linked (GlcNAc...) asparagine glycan is linked to Asn-103. Thr-105 is modified (phosphothreonine). A helical membrane pass occupies residues 210–230; the sequence is VLALHSLGLALLSALQALMPW. Residues 231-249 are Cytoplasmic-facing; sequence RYALKRIGGQFGSSVLSYF. Residues 250-270 traverse the membrane as a helical segment; that stretch reads LFLKTLLAFNALLLLLLVAFI. Over 271–338 the chain is Lumenal; the sequence is MGPQVAFPPA…TPRVGGLPYN (68 aa). Asn-312 carries an N-linked (GlcNAc...) asparagine glycan. The chain crosses the membrane as a helical span at residues 339-359; that stretch reads MPLAYLSTVGVSFFITCITLV. Residues 360–431 lie on the Cytoplasmic side of the membrane; sequence YSMAHSFGES…RSVCGRLRQA (72 aa). The helical transmembrane segment at 432–452 threads the bilayer; it reads AVLGLVWLLCLGTALGCAVAV. At 453–469 the chain is on the lumenal side; that stretch reads HVFSEFMIQSPEAAGQE. A helical membrane pass occupies residues 470 to 490; it reads AVLLVLPLVVGLLNLGAPYLC. The Cytoplasmic segment spans residues 491–505; it reads RVLAALEPHDSPVLE. A helical membrane pass occupies residues 506–526; the sequence is VYVAICRNLILKLAILGTLCY. At 527–553 the chain is on the lumenal side; the sequence is HWLGRRVGVLQGQCWEDFVGQELYRFL. The helical transmembrane segment at 554–574 threads the bilayer; sequence VMDFVLMLLDTLFGELVWRII. The Cytoplasmic segment spans residues 575–604; it reads SEKKLKRRRKPEFDIARNVLELIYGQTLTW. Residues 605-625 traverse the membrane as a helical segment; it reads LGVLFSPLLPAVQIIKLLLVF. The Lumenal segment spans residues 626 to 650; that stretch reads YVKKTSLLANCQAPRRPWLASHMST. A helical transmembrane segment spans residues 651–671; the sequence is VFLTLLCFPAFLGAAVFLCYA. The Cytoplasmic portion of the chain corresponds to 672–722; it reads VWQVKPSSTCGPFRTLDTMYEAGRVWVRHLEAAGPRVSWLPWVHRYLMENT. The helical transmembrane segment at 723 to 743 threads the bilayer; sequence FFVFLVSALLLAVIYLNIQVV. The Lumenal portion of the chain corresponds to 744–805; that stretch reads RGQRKVICLL…PALLTDEQDA (62 aa). The tract at residues 778–805 is disordered; it reads KEREERSRVGTTEEAAAPPALLTDEQDA.

The protein belongs to the TMC family. Interacts with TMC8. Interacts and forms a complex with TMC8 and CIB1; the interaction stabilizes each component of the complex. Interacts and forms a complex with TMC8 and SLC30A1/ZNT1; the interaction regulates zinc transport into the ER. In terms of assembly, (Microbial infection) Interacts with human papillomavirus 16/HPV16 protein E5; the interaction alleviates TMC6-mediated transcription factors inhibition. As to expression, expressed in placenta, prostate, testis, activated T-lymphocytes and lymphokine-activated killer (LAK) lymphocytes.

Its subcellular location is the endoplasmic reticulum membrane. The protein resides in the golgi apparatus membrane. It localises to the nucleus membrane. Functionally, acts as a regulatory protein involved in the regulation of numerous cellular processes. Together with its homolog TMC8/EVER2, forms a complex with CIB1 in lymphocytes and keratynocytes where TMC6 and TMC8 stabilize CIB1 and reciprocally. Together with TMC8, also forms a complex with and activates zinc transporter ZNT1 at the ER membrane of keratynocytes, thereby facilitating zinc uptake into the ER. Down-regulates the activity of transcription factors induced by zinc and cytokines. Also plays a role in thermal sensation by inhibiting the M-channel (KCNQ2-KCNQ3 channel) current in primary sensory neurons. This chain is Transmembrane channel-like protein 6, found in Homo sapiens (Human).